Here is a 398-residue protein sequence, read N- to C-terminus: Glycerol-3-phosphate dehydrogenase [NAD(+)] 1 (398 aa).

Residues 50 to 55 (GSGNWG), phenylalanine 138, lysine 161, and alanine 194 each bind NAD(+). Position 161 (lysine 161) interacts with substrate. Lysine 253 serves as the catalytic Proton acceptor. NAD(+) contacts are provided by arginine 318 and glutamine 350. Residue 318–319 (RN) coordinates substrate.

Belongs to the NAD-dependent glycerol-3-phosphate dehydrogenase family.

It is found in the cytoplasm. The enzyme catalyses sn-glycerol 3-phosphate + NAD(+) = dihydroxyacetone phosphate + NADH + H(+). In Yarrowia lipolytica (strain CLIB 122 / E 150) (Yeast), this protein is Glycerol-3-phosphate dehydrogenase [NAD(+)] 1 (GPD1).